We begin with the raw amino-acid sequence, 474 residues long: ATP synthase subunit beta (474 aa).

155 to 162 contacts ATP; that stretch reads GGAGVGKT.

The protein belongs to the ATPase alpha/beta chains family. F-type ATPases have 2 components, CF(1) - the catalytic core - and CF(0) - the membrane proton channel. CF(1) has five subunits: alpha(3), beta(3), gamma(1), delta(1), epsilon(1). CF(0) has three main subunits: a(1), b(2) and c(9-12). The alpha and beta chains form an alternating ring which encloses part of the gamma chain. CF(1) is attached to CF(0) by a central stalk formed by the gamma and epsilon chains, while a peripheral stalk is formed by the delta and b chains.

It is found in the cell inner membrane. The catalysed reaction is ATP + H2O + 4 H(+)(in) = ADP + phosphate + 5 H(+)(out). Its function is as follows. Produces ATP from ADP in the presence of a proton gradient across the membrane. The catalytic sites are hosted primarily by the beta subunits. This Sorangium cellulosum (strain So ce56) (Polyangium cellulosum (strain So ce56)) protein is ATP synthase subunit beta.